Consider the following 340-residue polypeptide: Alpha-1,4-N-acetylglucosaminyltransferase (340 aa).

Residues 1–4 (MRKE) lie on the Cytoplasmic side of the membrane. Residues 5 to 25 (LQLSLSVTLLLVCGFLYQFTL) form a helical; Signal-anchor for type II membrane protein membrane-spanning segment. Residues 26–340 (KSSCLFCLPS…VTGELGPGNK (315 aa)) lie on the Lumenal side of the membrane. N-linked (GlcNAc...) asparagine glycosylation is found at N99 and N138. A DXD motif motif is present at residues 167-169 (DTD). 2 N-linked (GlcNAc...) asparagine glycosylation sites follow: N251 and N282.

Belongs to the glycosyltransferase 32 family. Detected in stomach and pancreas.

The protein resides in the golgi apparatus membrane. It participates in protein modification; protein glycosylation. Functionally, catalyzes the transfer of N-acetylglucosamine (GlcNAc) to core 2 branched O-glycans. Necessary for the synthesis of type III mucin which is specifically produced in the stomach, duodenum, and pancreatic duct. May protect against inflammation-associated gastric adenocarcinomas. The sequence is that of Alpha-1,4-N-acetylglucosaminyltransferase (A4GNT) from Homo sapiens (Human).